A 209-amino-acid chain; its full sequence is Protein N-terminal glutamine amidohydrolase (209 aa).

Residues C30, H83, and D99 contribute to the active site.

The protein belongs to the NTAQ1 family. In terms of assembly, monomer. Widely expressed.

It localises to the cytoplasm. The protein resides in the cytosol. The protein localises to the nucleus. It catalyses the reaction N-terminal L-glutaminyl-[protein] + H2O = N-terminal L-glutamyl-[protein] + NH4(+). Functionally, mediates the side-chain deamidation of N-terminal glutamine residues to glutamate, an important step in N-end rule pathway of protein degradation. Conversion of the resulting N-terminal glutamine to glutamate renders the protein susceptible to arginylation, polyubiquitination and degradation as specified by the N-end rule. Does not act on substrates with internal or C-terminal glutamine and does not act on non-glutamine residues in any position. Does not deaminate acetylated N-terminal glutamine. With the exception of proline, all tested second-position residues on substrate peptides do not greatly influence the activity. In contrast, a proline at position 2, virtually abolishes deamidation of N-terminal glutamine. The chain is Protein N-terminal glutamine amidohydrolase (Ntaq1) from Mus musculus (Mouse).